The following is a 131-amino-acid chain: ATP synthase lipid-binding protein, mitochondrial (131 aa).

A mitochondrion-targeting transit peptide spans 1–56; it reads MLSAARLIAPAARSAIFSNAAVVRPLAAVSTQTQLVPAAPAQLSAVRSFQTTSVTK. A helical transmembrane segment spans residues 72–92; sequence VGVAGSGAGIGTVFGSLIIGY. Position 99 is an N6,N6,N6-trimethyllysine (K99). Residues 107–127 form a helical membrane-spanning segment; it reads ILGFALSEAMGLFCLMMAFLL.

The protein belongs to the ATPase C chain family. As to quaternary structure, F-type ATPases have 2 components, CF(1) - the catalytic core - and CF(0) - the membrane proton channel. CF(1) has five subunits: alpha(3), beta(3), gamma(1), delta(1), epsilon(1). CF(0) has three main subunits: a, b and c. Post-translationally, trimethylated by ATPSCKMT at Lys-99. Methylation may be required for proper incorporation of the C subunit into the ATP synthase complex and mitochondrial respiration.

It localises to the mitochondrion membrane. In terms of biological role, mitochondrial membrane ATP synthase (F(1)F(0) ATP synthase or Complex V) produces ATP from ADP in the presence of a proton gradient across the membrane which is generated by electron transport complexes of the respiratory chain. F-type ATPases consist of two structural domains, F(1) - containing the extramembraneous catalytic core and F(0) - containing the membrane proton channel, linked together by a central stalk and a peripheral stalk. During catalysis, ATP synthesis in the catalytic domain of F(1) is coupled via a rotary mechanism of the central stalk subunits to proton translocation. Part of the complex F(0) domain. A homomeric c-ring of probably 10 subunits is part of the complex rotary element. This chain is ATP synthase lipid-binding protein, mitochondrial, found in Manduca sexta (Tobacco hawkmoth).